A 119-amino-acid polypeptide reads, in one-letter code: Large ribosomal subunit protein bL20c (119 aa).

This sequence belongs to the bacterial ribosomal protein bL20 family.

It is found in the plastid. Its subcellular location is the chloroplast. Functionally, binds directly to 23S ribosomal RNA and is necessary for the in vitro assembly process of the 50S ribosomal subunit. It is not involved in the protein synthesizing functions of that subunit. This is Large ribosomal subunit protein bL20c from Brachypodium distachyon (Purple false brome).